A 165-amino-acid chain; its full sequence is MEKMEKVEFIDVKVVPYRLLNPQTVETILNKIYDLDGIVRVLVHGPSIPKEIPYGPAKGIKVNHKDRQVIKVKGEEVELKVKVGEIIVGVLCDDKMDENIGKIEKIMDENLPCSYQMWVGTYTKRDVTVTDWMKYGPKFEKKLDPRYIGLVDPNSKVKENVKLIK.

MCR is composed of three subunits: alpha, beta, and gamma. The function of protein D is not known.

The polypeptide is Methyl-coenzyme M reductase II operon protein D (mrtD) (Methanothermus fervidus (strain ATCC 43054 / DSM 2088 / JCM 10308 / V24 S)).